The sequence spans 135 residues: ATP synthase epsilon chain (135 aa).

This sequence belongs to the ATPase epsilon chain family. In terms of assembly, F-type ATPases have 2 components, CF(1) - the catalytic core - and CF(0) - the membrane proton channel. CF(1) has five subunits: alpha(3), beta(3), gamma(1), delta(1), epsilon(1). CF(0) has three main subunits: a, b and c.

It localises to the cellular thylakoid membrane. Its function is as follows. Produces ATP from ADP in the presence of a proton gradient across the membrane. The sequence is that of ATP synthase epsilon chain from Prochlorococcus marinus (strain MIT 9211).